Reading from the N-terminus, the 350-residue chain is UDP-N-acetylenolpyruvoylglucosamine reductase (350 aa).

Residues 24–195 form the FAD-binding PCMH-type domain; it reads HVEATARWLL…VAVEFNLPLL (172 aa). The active site involves Arg-172. Residue Ser-245 is the Proton donor of the active site. Glu-342 is an active-site residue.

It belongs to the MurB family. The cofactor is FAD.

Its subcellular location is the cytoplasm. The catalysed reaction is UDP-N-acetyl-alpha-D-muramate + NADP(+) = UDP-N-acetyl-3-O-(1-carboxyvinyl)-alpha-D-glucosamine + NADPH + H(+). It functions in the pathway cell wall biogenesis; peptidoglycan biosynthesis. In terms of biological role, cell wall formation. The polypeptide is UDP-N-acetylenolpyruvoylglucosamine reductase (Xanthomonas oryzae pv. oryzae (strain PXO99A)).